The primary structure comprises 131 residues: Small ribosomal subunit protein bS6 (131 aa).

Positions 97–131 are disordered; the sequence is TEASPMVKAKDERRRDVAEDLDEEEVDDVAEDSEE. The span at 104-114 shows a compositional bias: basic and acidic residues; the sequence is KAKDERRRDVA. The segment covering 115–131 has biased composition (acidic residues); sequence EDLDEEEVDDVAEDSEE.

The protein belongs to the bacterial ribosomal protein bS6 family.

Binds together with bS18 to 16S ribosomal RNA. The chain is Small ribosomal subunit protein bS6 from Proteus mirabilis (strain HI4320).